The chain runs to 574 residues: Iron hydrogenase 1 (574 aa).

One can recognise a 2Fe-2S ferredoxin-type domain in the interval 1 to 78; it reads MKTIIINGVQ…GMIINTNSDA (78 aa). [2Fe-2S] cluster-binding residues include C34, C46, C49, and C62. The region spanning 78–117 is the 4Fe-4S His(Cys)3-ligated-type domain; sequence AVNEKIKSRISQLLDIHEFKCGPCNRRENCEFLKLVIKYK. The [4Fe-4S] cluster site is built by H94, C98, C101, C107, C147, C150, C153, C157, C190, C193, C196, C200, C300, C355, C499, and C503. 2 4Fe-4S ferredoxin-type domains span residues 138-167 and 181-210; these read KSLT…YAMK and DEKC…EKSH. C503 provides a ligand contact to Fe(2+).

Monomer. Requires [2Fe-2S] cluster as cofactor. It depends on [4Fe-4S] cluster as a cofactor. Fe(2+) serves as cofactor.

The catalysed reaction is H2 + 2 oxidized [2Fe-2S]-[ferredoxin] = 2 reduced [2Fe-2S]-[ferredoxin] + 2 H(+). This Clostridium pasteurianum protein is Iron hydrogenase 1.